The chain runs to 206 residues: Histidine biosynthesis bifunctional protein HisIE (206 aa).

The segment at 1–117 is phosphoribosyl-AMP cyclohydrolase; it reads MCNEPATSDV…SCFPAAPGQF (117 aa). The tract at residues 118–206 is phosphoribosyl-ATP pyrophosphohydrolase; sequence LGALDALVAE…AVTVLEARHR (89 aa).

This sequence in the N-terminal section; belongs to the PRA-CH family. In the C-terminal section; belongs to the PRA-PH family.

The protein resides in the cytoplasm. The catalysed reaction is 1-(5-phospho-beta-D-ribosyl)-ATP + H2O = 1-(5-phospho-beta-D-ribosyl)-5'-AMP + diphosphate + H(+). The enzyme catalyses 1-(5-phospho-beta-D-ribosyl)-5'-AMP + H2O = 1-(5-phospho-beta-D-ribosyl)-5-[(5-phospho-beta-D-ribosylamino)methylideneamino]imidazole-4-carboxamide. Its pathway is amino-acid biosynthesis; L-histidine biosynthesis; L-histidine from 5-phospho-alpha-D-ribose 1-diphosphate: step 2/9. It functions in the pathway amino-acid biosynthesis; L-histidine biosynthesis; L-histidine from 5-phospho-alpha-D-ribose 1-diphosphate: step 3/9. The polypeptide is Histidine biosynthesis bifunctional protein HisIE (hisI) (Xylella fastidiosa (strain Temecula1 / ATCC 700964)).